Reading from the N-terminus, the 89-residue chain is Small ribosomal subunit protein uS19 (89 aa).

It belongs to the universal ribosomal protein uS19 family.

Its function is as follows. Protein S19 forms a complex with S13 that binds strongly to the 16S ribosomal RNA. The sequence is that of Small ribosomal subunit protein uS19 from Xanthomonas campestris pv. campestris (strain 8004).